We begin with the raw amino-acid sequence, 215 residues long: MKYQLTALEARVIGCLLEKQVTTPEQYPLSVNGVVTACNQKTNREPVMNLSESEVQEQLDNLVKRHYLRTVSGFGNRVTKYEQRFCNSEFGDLKLSAAEVALITTLLLRGAQTPGELRSRAARMYEFSDMAEVESTLEQLANREDGPFVVRLAREPGKRESRYMHLFSGEVEDQPAVMDMSNAVDGDLQARVEALEIEVAELKQRLDSLLAHLGD.

Lys-80 is subject to N6-acetyllysine.

It belongs to the UPF0502 family.

The protein is UPF0502 protein YceH of Escherichia coli O45:K1 (strain S88 / ExPEC).